The chain runs to 44 residues: Cytochrome b559 subunit beta (44 aa).

Residues 19 to 35 traverse the membrane as a helical segment; sequence WLAIHGIAIPTVFFLGA. His23 lines the heme pocket.

It belongs to the PsbE/PsbF family. As to quaternary structure, heterodimer of an alpha subunit and a beta subunit. PSII is composed of 1 copy each of membrane proteins PsbA, PsbB, PsbC, PsbD, PsbE, PsbF, PsbH, PsbI, PsbJ, PsbK, PsbL, PsbM, PsbT, PsbX, PsbY, PsbZ, Psb30/Ycf12, at least 3 peripheral proteins of the oxygen-evolving complex and a large number of cofactors. It forms dimeric complexes. Requires heme b as cofactor.

The protein resides in the plastid. It localises to the chloroplast thylakoid membrane. Functionally, this b-type cytochrome is tightly associated with the reaction center of photosystem II (PSII). PSII is a light-driven water:plastoquinone oxidoreductase that uses light energy to abstract electrons from H(2)O, generating O(2) and a proton gradient subsequently used for ATP formation. It consists of a core antenna complex that captures photons, and an electron transfer chain that converts photonic excitation into a charge separation. The sequence is that of Cytochrome b559 subunit beta from Gracilaria tenuistipitata var. liui (Red alga).